Reading from the N-terminus, the 397-residue chain is Corticosteroid-binding globulin (397 aa).

The signal sequence occupies residues 1 to 22 (MSLALYTCLFWLCTSGLWTTQA). Asparagine 89, asparagine 169, asparagine 217, and asparagine 232 each carry an N-linked (GlcNAc...) asparagine glycan. Glutamine 247 provides a ligand contact to cortisol. N-linked (GlcNAc...) asparagine glycosylation is present at asparagine 253. Aspartate 279 contributes to the cortisol binding site. N-linked (GlcNAc...) asparagine glycosylation occurs at asparagine 320. Position 385 (tryptophan 385) interacts with cortisol.

This sequence belongs to the serpin family. In terms of tissue distribution, expressed by the liver; secreted in plasma.

Its subcellular location is the secreted. Functionally, major transport protein for glucocorticoids and progestins in the blood of almost all vertebrate species. The chain is Corticosteroid-binding globulin (Serpina6) from Mus musculus (Mouse).